Here is a 418-residue protein sequence, read N- to C-terminus: uncharacterized protein (418 aa).

This is an uncharacterized protein from Escherichia coli O157:H7.